Consider the following 288-residue polypeptide: MNIKYFLIFLILLAVTSFTLFSGCTGFAGNTPETSGKNSNVESIENLVPDISNNASDVLYQVSTIDALLLGVYDGVLPVSDLKTHGDFGIGTFDGLEGEMLALDGNYYQIKTDGIAYPVSGEITTPFATVTYFEADETFRLEKSANLSELEDFLDLNLPSENLFYAVKVDGNFSYVKARSVPRQEKPYLQLADAVSSQSVFEFENVSGTLVGFRTPEYVKGVNVPGYHLHFITENRSAGGHVLDLEMEKGDAALDITSIFLMELPASGDFYNAELGQNLQEDLEKVEK.

Positions 1 to 23 (MNIKYFLIFLILLAVTSFTLFSG) are cleaved as a signal peptide.

This sequence belongs to the alpha-acetolactate decarboxylase family.

The enzyme catalyses (2S)-2-acetolactate + H(+) = (R)-acetoin + CO2. It participates in polyol metabolism; (R,R)-butane-2,3-diol biosynthesis; (R,R)-butane-2,3-diol from pyruvate: step 2/3. Its function is as follows. Converts acetolactate into acetoin. The protein is Alpha-acetolactate decarboxylase of Methanosarcina mazei (strain ATCC BAA-159 / DSM 3647 / Goe1 / Go1 / JCM 11833 / OCM 88) (Methanosarcina frisia).